We begin with the raw amino-acid sequence, 330 residues long: Taste receptor type 2 member 117 (330 aa).

The Extracellular portion of the chain corresponds to 1-16 (MKHFWKILSVISQSTL). The helical transmembrane segment at 17–37 (SVILIVELVIGIIGNGFMVLV) threads the bilayer. Over 38-53 (HCMDWVKKKKMSLVNQ) the chain is Cytoplasmic. Residues 54-74 (ILTALSISRIFQLCLLFISLV) traverse the membrane as a helical segment. Over 75-95 (INFSYTDLTTSSRMIQVMYNA) the chain is Extracellular. N-linked (GlcNAc...) asparagine glycosylation is present at Asn76. Residues 96 to 116 (WILANHFSIWIATCLTVLYFL) form a helical membrane-spanning segment. At 117–135 (KIANFSNSFFLYLKWRVEK) the chain is on the cytoplasmic side. The helical transmembrane segment at 136–156 (VVSVTLLVSLLLLILNILLTN) threads the bilayer. Residues 157–190 (LETDMWTNEYQRNISCSFSSHYYAKCHRQVLRLH) lie on the Extracellular side of the membrane. Asn169 carries an N-linked (GlcNAc...) asparagine glycan. A helical transmembrane segment spans residues 191 to 211 (IIFLSVPVVLSLSTFLLLIFS). Residues 212–239 (LWTHHKRMQQHVQGGRDARTTAHFKALQ) lie on the Cytoplasmic side of the membrane. Residues 240 to 260 (TVIAFFLLYSIFILSVLIQIW) traverse the membrane as a helical segment. Topologically, residues 261 to 269 (KYELLKKNL) are extracellular. A helical transmembrane segment spans residues 270-290 (FVVFCEVVYIAFPTFHSYILI). The Cytoplasmic segment spans residues 291–330 (VGDMKLRQACLPLCIIAAEIQTTLCRNFRSLKYFRLCCIF).

It belongs to the G-protein coupled receptor T2R family.

It localises to the membrane. In terms of biological role, putative taste receptor which may play a role in the perception of bitterness. The sequence is that of Taste receptor type 2 member 117 from Mus musculus (Mouse).